Consider the following 469-residue polypeptide: Cysteine protease ATG4 (469 aa).

Positions 48-99 (KNIKADDHHPQTPPSVLKAETETQEAHDTAQPPNPPTNAPDTPPDSISSSFS) are disordered. Basic and acidic residues predominate over residues 66-75 (AETETQEAHD). Residues 79–90 (PPNPPTNAPDTP) are compositionally biased toward pro residues. Cys-172 acts as the Nucleophile in catalysis. Catalysis depends on residues Asp-362 and His-364. The interval 443 to 469 (GSSEGRESAIDEVETLSDDDTDTIHEA) is disordered. The span at 452–463 (IDEVETLSDDDT) shows a compositional bias: acidic residues.

The protein belongs to the peptidase C54 family. In terms of assembly, interacts with ATG8.

The protein localises to the cytoplasm. Its subcellular location is the nucleus. It is found in the preautophagosomal structure. The enzyme catalyses [protein]-C-terminal L-amino acid-glycyl-phosphatidylethanolamide + H2O = [protein]-C-terminal L-amino acid-glycine + a 1,2-diacyl-sn-glycero-3-phosphoethanolamine. Functionally, cysteine protease that plays a key role in cytoplasm to vacuole transport (Cvt) and autophagy by mediating both proteolytic activation and delipidation of ATG8. Required for selective autophagic degradation of the nucleus (nucleophagy) as well as for mitophagy which contributes to regulate mitochondrial quantity and quality by eliminating the mitochondria to a basal level to fulfill cellular energy requirements and preventing excess ROS production. The protease activity is required for proteolytic activation of ATG8: cleaves the C-terminal amino acid of ATG8 to reveal a C-terminal glycine. ATG8 ubiquitin-like activity requires the exposure of the glycine at the C-terminus for its conjugation to phosphatidylethanolamine (PE) and its insertion to membranes, which is necessary for autophagy. The ATG8-PE conjugate mediates tethering between adjacent membranes and stimulates membrane hemifusion, leading to expansion of the autophagosomal membrane during autophagy. In addition to the protease activity, also catalyzes deconjugation of PE-conjugated forms of ATG8 during macroautophagy: ATG8 delipidation is required to release the protein from membranes, which facilitates multiple events during macroautophagy, and especially for efficient autophagosome biogenesis, the assembly of ATG9-containing tubulovesicular clusters into phagophores/autophagosomes, and for the disassembly of PAS-associated ATG components. ATG8 delipidation by ATG4 also recycles ATG8-PE generated on inappropriate membranes to maintain a reservoir of unlipidated ATG8 that is required for autophagosome formation at the PAS. Autophagy is required for proper vegetative growth, asexual/sexual reproduction, and full virulence. Autophagy is particularly involved in the biosynthesis of deoxynivalenol (DON), an important virulence determinant. The chain is Cysteine protease ATG4 from Gibberella zeae (strain ATCC MYA-4620 / CBS 123657 / FGSC 9075 / NRRL 31084 / PH-1) (Wheat head blight fungus).